Consider the following 463-residue polypeptide: Thiamine-repressible acid phosphatase pho4 (463 aa).

Residues 1 to 18 form the signal peptide; it reads MKLSGISLWLLAASIVHA. The active-site Nucleophile is histidine 69. N-linked (GlcNAc...) asparagine glycans are attached at residues asparagine 98, asparagine 104, asparagine 186, asparagine 221, asparagine 251, and asparagine 328. Residue aspartate 341 is the Proton donor of the active site. N-linked (GlcNAc...) asparagine glycans are attached at residues asparagine 433, asparagine 439, and asparagine 458.

This sequence belongs to the histidine acid phosphatase family.

The protein localises to the secreted. It localises to the cell wall. The catalysed reaction is a phosphate monoester + H2O = an alcohol + phosphate. In terms of biological role, may dephosphorylate thiamine phosphates. The protein is Thiamine-repressible acid phosphatase pho4 (pho4) of Schizosaccharomyces pombe (strain 972 / ATCC 24843) (Fission yeast).